We begin with the raw amino-acid sequence, 110 residues long: UPF0122 protein lmo1802 (110 aa).

Belongs to the UPF0122 family.

Might take part in the signal recognition particle (SRP) pathway. This is inferred from the conservation of its genetic proximity to ftsY/ffh. May be a regulatory protein. The protein is UPF0122 protein lmo1802 of Listeria monocytogenes serovar 1/2a (strain ATCC BAA-679 / EGD-e).